The following is a 103-amino-acid chain: Iron-sulfur cluster assembly protein CyaY (103 aa).

This sequence belongs to the frataxin family.

In terms of biological role, involved in iron-sulfur (Fe-S) cluster assembly. May act as a regulator of Fe-S biogenesis. The polypeptide is Iron-sulfur cluster assembly protein CyaY (Rickettsia rickettsii (strain Iowa)).